A 768-amino-acid chain; its full sequence is MNTQPHASHTDSNTLMLGRYAERAYLEYAMSVVKGRALPEVSDGQKPVQRRILFAMRDMGLTAGAKPVKSARVVGEILGKYHPHGDSSAYEAMVRMAQDFTLRYPLIDGIGNFGSRDGDGAAAMRYTEARLTPIAELLLSEINQGTVDFMPNYDGAFDEPLHLPARLPMVLLNGASGIAVGMATEIPSHNLNEVTQAAIALLKKPTLETADLMQYIPAPDFAGGGQIITPADELRRIYETGKGSVRVRARYEIEKLARGQWRVIVTELPPNANSAKILAEIEEQTNPKPKAGKKQLNQDRLNTKKLMLDLIDRVRDESDGEHPVRLVFEPKSSRIDTDTFINTLMAQTSLEGNVSMNLVMMGLDNRPAQKNLKTILQEWLDFRIVTVTRRLKFRLNQVEKRLHILEGRLKVFLHIDEVIKVIRESDDPKADLMAVFGLTEIQAEDILEIRLRQLARLEGFKLEKELNELREEQGRLNIFLGDENEKRKLIIKEMQADMKQFGDARRTLVEEAGRAVLTQTAADEPITLILSEKGWIRSRAGHNLDLSQTAFKEGDRLKQTLEGPHCFTRRHPRFIRGRTYSIDAAEIPGGRGDGVPVSSLIELQNGAKPVAMLTGLPEQHYLLSSSGGYGFIAKLGDMVGRVKAGKVVMTADSGETVLPPVAVYASSFINPDCKIIAATSQNRALAFPIGELKIMAKGKGLQIIGLNAGESMTHTAVSSEPEILIESEGRRGAAHKDRLPVALIEAKRGKKGRLLPISGSLKQLSSPK.

One can recognise a Topo IIA-type catalytic domain in the interval 38-521 (LPEVSDGQKP…AGRAVLTQTA (484 aa)). The active-site O-(5'-phospho-DNA)-tyrosine intermediate is the Tyr-126.

This sequence belongs to the type II topoisomerase GyrA/ParC subunit family. ParC type 1 subfamily. As to quaternary structure, heterotetramer composed of ParC and ParE.

It localises to the cell membrane. The enzyme catalyses ATP-dependent breakage, passage and rejoining of double-stranded DNA.. Functionally, topoisomerase IV is essential for chromosome segregation. It relaxes supercoiled DNA. Performs the decatenation events required during the replication of a circular DNA molecule. The protein is DNA topoisomerase 4 subunit A of Neisseria gonorrhoeae.